A 387-amino-acid chain; its full sequence is Zinc finger protein neuro-d4 (387 aa).

Residues lysine 106, lysine 129, and lysine 133 each participate in a glycyl lysine isopeptide (Lys-Gly) (interchain with G-Cter in SUMO2) cross-link. A C2H2-type zinc finger spans residues 195–218 (YVCDICGKRYKNRPGLSYHYTHTH). 2 PHD-type zinc fingers span residues 271-328 (NGYC…CKSC) and 325-375 (CKSC…CLRH). 16 residues coordinate Zn(2+): cysteine 274, cysteine 277, cysteine 293, cysteine 296, histidine 301, cysteine 304, cysteine 322, cysteine 325, cysteine 328, cysteine 331, cysteine 343, cysteine 346, histidine 351, cysteine 354, cysteine 369, and cysteine 372.

Belongs to the requiem/DPF family. As to quaternary structure, component of neuron-specific chromatin remodeling complex (nBAF complex) composed of at least, ARID1A/BAF250A or ARID1B/BAF250B, SMARCD1/BAF60A, SMARCD3/BAF60C, SMARCA2/BRM/BAF190B, SMARCA4/BRG1/BAF190A, SMARCB1/BAF47, SMARCC1/BAF155, SMARCE1/BAF57, SMARCC2/BAF170, DPF1/BAF45B, DPF3/BAF45C, ACTL6B/BAF53B and actin. As to expression, at embryonic stages, predominant expression in the nervous system. Expressed specifically in postmitotic neurons (at protein level).

The protein resides in the cytoplasm. Its subcellular location is the nucleus. Functionally, may have an important role in developing neurons by participating in regulation of cell survival, possibly as a neurospecific transcription factor. Belongs to the neuron-specific chromatin remodeling complex (nBAF complex). During neural development a switch from a stem/progenitor to a postmitotic chromatin remodeling mechanism occurs as neurons exit the cell cycle and become committed to their adult state. The transition from proliferating neural stem/progenitor cells to postmitotic neurons requires a switch in subunit composition of the npBAF and nBAF complexes. As neural progenitors exit mitosis and differentiate into neurons, npBAF complexes which contain ACTL6A/BAF53A and PHF10/BAF45A, are exchanged for homologous alternative ACTL6B/BAF53B and DPF1/BAF45B or DPF3/BAF45C subunits in neuron-specific complexes (nBAF). The npBAF complex is essential for the self-renewal/proliferative capacity of the multipotent neural stem cells. The nBAF complex along with CREST plays a role regulating the activity of genes essential for dendrite growth. The chain is Zinc finger protein neuro-d4 from Mus musculus (Mouse).